The following is a 1436-amino-acid chain: Gag-Pol polyprotein (1436 aa).

Residue glycine 2 is the site of N-myristoyl glycine; by host attachment. The interaction with Gp41 stretch occupies residues 7-31; sequence VLSGGKLDAWEKIRLRPGGKKKYRL. The interaction with host CALM1 stretch occupies residues 8-43; it reads LSGGKLDAWEKIRLRPGGKKKYRLKHLVWASRELER. The segment at 12 to 19 is interaction with host AP3D1; that stretch reads KLDAWEKI. The interaction with membrane phosphatidylinositol 4,5-bisphosphate and RNA stretch occupies residues 14 to 33; it reads DAWEKIRLRPGGKKKYRLKH. The short motif at 16–22 is the Nuclear export signal element; the sequence is WEKIRLR. The Nuclear localization signal signature appears at 26 to 32; that stretch reads KKKYRLK. Residues 73-77 form an interaction with membrane phosphatidylinositol 4,5-bisphosphate region; the sequence is EELRS. The tract at residues 102 to 129 is disordered; that stretch reads EKMEEEQNKSKNKKAQQAAADAGNNSQV. Low complexity predominate over residues 116 to 128; sequence AQQAAADAGNNSQ. Tyrosine 133 carries the phosphotyrosine; by host modification. An interaction with human PPIA/CYPA and NUP153 region spans residues 190-228; that stretch reads NTVGGHQAAMQMLKETINEEAAEWDRLHPVHAGPIAPGQ. Positions 278 to 364 are dimerization/Multimerization of capsid protein p24; that stretch reads YSPVSILDIR…GGPSHKARVL (87 aa). 2 CCHC-type zinc fingers span residues 392-409 and 413-430; these read IKCF…NCRA and KGCW…DCTE. Residues 490 to 494 are dimerization of protease; that stretch reads PQITL. The 70-residue stretch at 509-578 folds into the Peptidase A2 domain; that stretch reads KEALLDTGAD…TPVNIIGRNL (70 aa). Aspartate 514 (for protease activity; shared with dimeric partner) is an active-site residue. 2 dimerization of protease regions span residues 538 to 544 and 577 to 589; these read GIGGFIK and NLLT…LNFP. The region spanning 632–822 is the Reverse transcriptase domain; the sequence is EGKISRVGPE…PPFLWMGYEL (191 aa). The Mg(2+) site is built by aspartate 698, aspartate 773, and aspartate 774. The interval 815–823 is RT 'primer grip'; the sequence is FLWMGYELH. Residues 986–1002 carry the Tryptophan repeat motif motif; the sequence is WETWWVEYWQATWIPEW. The RNase H type-1 domain occupies 1022-1145; that stretch reads IIGAETFYVD…VDKLVSQGIR (124 aa). The Mg(2+) site is built by aspartate 1031, glutamate 1066, aspartate 1086, and aspartate 1137. The Integrase-type zinc-finger motif lies at 1151-1192; sequence DGIDKAQEEHEKYHNNWRAMASDFNLPPVVAKEIVASCDKCQ. Residues histidine 1160, histidine 1164, cysteine 1188, and cysteine 1191 each contribute to the Zn(2+) site. One can recognise an Integrase catalytic domain in the interval 1202-1352; the sequence is VDCSPGIWQL…SAGERIIDII (151 aa). Residues aspartate 1212, aspartate 1264, and glutamate 1300 each contribute to the Mg(2+) site. Residues 1371-1418 constitute a DNA-binding region (integrase-type); it reads FRVYYRDSRDPIWKGPAKLLWKGEGAVVIQDNSDIKVVPRRKVKIIRD.

Homotrimer; further assembles as hexamers of trimers. Interacts with gp41 (via C-terminus). Interacts with host CALM1; this interaction induces a conformational change in the Matrix protein, triggering exposure of the myristate group. Interacts with host AP3D1; this interaction allows the polyprotein trafficking to multivesicular bodies during virus assembly. Part of the pre-integration complex (PIC) which is composed of viral genome, matrix protein, Vpr and integrase. As to quaternary structure, homodimer; the homodimer further multimerizes as homohexamers or homopentamers. Interacts with human PPIA/CYPA; This interaction stabilizes the capsid. Interacts with human NUP153. Interacts with host PDZD8; this interaction stabilizes the capsid. Interacts with monkey TRIM5; this interaction destabilizes the capsid. In terms of assembly, homodimer, whose active site consists of two apposed aspartic acid residues. Heterodimer of p66 RT and p51 RT (RT p66/p51). Heterodimerization of RT is essential for DNA polymerase activity. The overall folding of the subdomains is similar in p66 RT and p51 RT but the spatial arrangements of the subdomains are dramatically different. As to quaternary structure, homotetramer; may further associate as a homohexadecamer. Part of the pre-integration complex (PIC) which is composed of viral genome, matrix protein, Vpr and integrase. Interacts with human SMARCB1/INI1 and human PSIP1/LEDGF isoform 1. Interacts with human KPNA3; this interaction might play a role in nuclear import of the pre-integration complex. Interacts with human NUP153; this interaction might play a role in nuclear import of the pre-integration complex. The cofactor is Mg(2+). Specific enzymatic cleavages by the viral protease yield mature proteins. The protease is released by autocatalytic cleavage. The polyprotein is cleaved during and after budding, this process is termed maturation. Proteolytic cleavage of p66 RT removes the RNase H domain to yield the p51 RT subunit. Nucleocapsid protein p7 might be further cleaved after virus entry. In terms of processing, tyrosine phosphorylated presumably in the virion by a host kinase. Phosphorylation is apparently not a major regulator of membrane association. Post-translationally, phosphorylated possibly by host MAPK1; this phosphorylation is necessary for Pin1-mediated virion uncoating. Methylated by host PRMT6, impairing its function by reducing RNA annealing and the initiation of reverse transcription.

The protein localises to the host cell membrane. Its subcellular location is the host endosome. It is found in the host multivesicular body. The protein resides in the virion membrane. It localises to the host nucleus. The protein localises to the host cytoplasm. Its subcellular location is the virion. It carries out the reaction Specific for a P1 residue that is hydrophobic, and P1' variable, but often Pro.. The catalysed reaction is Endohydrolysis of RNA in RNA/DNA hybrids. Three different cleavage modes: 1. sequence-specific internal cleavage of RNA. Human immunodeficiency virus type 1 and Moloney murine leukemia virus enzymes prefer to cleave the RNA strand one nucleotide away from the RNA-DNA junction. 2. RNA 5'-end directed cleavage 13-19 nucleotides from the RNA end. 3. DNA 3'-end directed cleavage 15-20 nucleotides away from the primer terminus.. The enzyme catalyses 3'-end directed exonucleolytic cleavage of viral RNA-DNA hybrid.. It catalyses the reaction DNA(n) + a 2'-deoxyribonucleoside 5'-triphosphate = DNA(n+1) + diphosphate. Protease: The viral protease is inhibited by many synthetic protease inhibitors (PIs), such as amprenavir, atazanavir, indinavir, loprinavir, nelfinavir, ritonavir and saquinavir. Use of protease inhibitors in tritherapy regimens permit more ambitious therapeutic strategies. Reverse transcriptase/ribonuclease H: RT can be inhibited either by nucleoside RT inhibitors (NRTIs) or by non nucleoside RT inhibitors (NNRTIs). NRTIs act as chain terminators, whereas NNRTIs inhibit DNA polymerization by binding a small hydrophobic pocket near the RT active site and inducing an allosteric change in this region. Classical NRTIs are abacavir, adefovir (PMEA), didanosine (ddI), lamivudine (3TC), stavudine (d4T), tenofovir (PMPA), zalcitabine (ddC), and zidovudine (AZT). Classical NNRTIs are atevirdine (BHAP U-87201E), delavirdine, efavirenz (DMP-266), emivirine (I-EBU), and nevirapine (BI-RG-587). The tritherapies used as a basic effective treatment of AIDS associate two NRTIs and one NNRTI. Its function is as follows. Mediates, with Gag polyprotein, the essential events in virion assembly, including binding the plasma membrane, making the protein-protein interactions necessary to create spherical particles, recruiting the viral Env proteins, and packaging the genomic RNA via direct interactions with the RNA packaging sequence (Psi). Gag-Pol polyprotein may regulate its own translation, by the binding genomic RNA in the 5'-UTR. At low concentration, the polyprotein would promote translation, whereas at high concentration, the polyprotein would encapsidate genomic RNA and then shut off translation. In terms of biological role, targets the polyprotein to the plasma membrane via a multipartite membrane-binding signal, that includes its myristoylated N-terminus. Matrix protein is part of the pre-integration complex. Implicated in the release from host cell mediated by Vpu. Binds to RNA. Forms the conical core that encapsulates the genomic RNA-nucleocapsid complex in the virion. Most core are conical, with only 7% tubular. The core is constituted by capsid protein hexamer subunits. The core is disassembled soon after virion entry. Host restriction factors such as TRIM5-alpha or TRIMCyp bind retroviral capsids and cause premature capsid disassembly, leading to blocks in reverse transcription. Capsid restriction by TRIM5 is one of the factors which restricts HIV-1 to the human species. Host PIN1 apparently facilitates the virion uncoating. On the other hand, interactions with PDZD8 or CYPA stabilize the capsid. Functionally, encapsulates and protects viral dimeric unspliced genomic RNA (gRNA). Binds these RNAs through its zinc fingers. Acts as a nucleic acid chaperone which is involved in rearangement of nucleic acid secondary structure during gRNA retrotranscription. Also facilitates template switch leading to recombination. As part of the polyprotein, participates in gRNA dimerization, packaging, tRNA incorporation and virion assembly. Its function is as follows. Aspartyl protease that mediates proteolytic cleavages of Gag and Gag-Pol polyproteins during or shortly after the release of the virion from the plasma membrane. Cleavages take place as an ordered, step-wise cascade to yield mature proteins. This process is called maturation. Displays maximal activity during the budding process just prior to particle release from the cell. Also cleaves Nef and Vif, probably concomitantly with viral structural proteins on maturation of virus particles. Hydrolyzes host EIF4GI and PABP1 in order to shut off the capped cellular mRNA translation. The resulting inhibition of cellular protein synthesis serves to ensure maximal viral gene expression and to evade host immune response. Also mediates cleavage of host YTHDF3. Mediates cleavage of host CARD8, thereby activating the CARD8 inflammasome, leading to the clearance of latent HIV-1 in patient CD4(+) T-cells after viral reactivation; in contrast, HIV-1 can evade CARD8-sensing when its protease remains inactive in infected cells prior to viral budding. In terms of biological role, multifunctional enzyme that converts the viral RNA genome into dsDNA in the cytoplasm, shortly after virus entry into the cell. This enzyme displays a DNA polymerase activity that can copy either DNA or RNA templates, and a ribonuclease H (RNase H) activity that cleaves the RNA strand of RNA-DNA heteroduplexes in a partially processive 3' to 5' endonucleasic mode. Conversion of viral genomic RNA into dsDNA requires many steps. A tRNA(3)-Lys binds to the primer-binding site (PBS) situated at the 5'-end of the viral RNA. RT uses the 3' end of the tRNA primer to perform a short round of RNA-dependent minus-strand DNA synthesis. The reading proceeds through the U5 region and ends after the repeated (R) region which is present at both ends of viral RNA. The portion of the RNA-DNA heteroduplex is digested by the RNase H, resulting in a ssDNA product attached to the tRNA primer. This ssDNA/tRNA hybridizes with the identical R region situated at the 3' end of viral RNA. This template exchange, known as minus-strand DNA strong stop transfer, can be either intra- or intermolecular. RT uses the 3' end of this newly synthesized short ssDNA to perform the RNA-dependent minus-strand DNA synthesis of the whole template. RNase H digests the RNA template except for two polypurine tracts (PPTs) situated at the 5'-end and near the center of the genome. It is not clear if both polymerase and RNase H activities are simultaneous. RNase H probably can proceed both in a polymerase-dependent (RNA cut into small fragments by the same RT performing DNA synthesis) and a polymerase-independent mode (cleavage of remaining RNA fragments by free RTs). Secondly, RT performs DNA-directed plus-strand DNA synthesis using the PPTs that have not been removed by RNase H as primers. PPTs and tRNA primers are then removed by RNase H. The 3' and 5' ssDNA PBS regions hybridize to form a circular dsDNA intermediate. Strand displacement synthesis by RT to the PBS and PPT ends produces a blunt ended, linear dsDNA copy of the viral genome that includes long terminal repeats (LTRs) at both ends. Catalyzes viral DNA integration into the host chromosome, by performing a series of DNA cutting and joining reactions. This enzyme activity takes place after virion entry into a cell and reverse transcription of the RNA genome in dsDNA. The first step in the integration process is 3' processing. This step requires a complex comprising the viral genome, matrix protein, Vpr and integrase. This complex is called the pre-integration complex (PIC). The integrase protein removes 2 nucleotides from each 3' end of the viral DNA, leaving recessed CA OH's at the 3' ends. In the second step, the PIC enters cell nucleus. This process is mediated through integrase and Vpr proteins, and allows the virus to infect a non dividing cell. This ability to enter the nucleus is specific of lentiviruses, other retroviruses cannot and rely on cell division to access cell chromosomes. In the third step, termed strand transfer, the integrase protein joins the previously processed 3' ends to the 5' ends of strands of target cellular DNA at the site of integration. The 5'-ends are produced by integrase-catalyzed staggered cuts, 5 bp apart. A Y-shaped, gapped, recombination intermediate results, with the 5'-ends of the viral DNA strands and the 3' ends of target DNA strands remaining unjoined, flanking a gap of 5 bp. The last step is viral DNA integration into host chromosome. This involves host DNA repair synthesis in which the 5 bp gaps between the unjoined strands are filled in and then ligated. Since this process occurs at both cuts flanking the HIV genome, a 5 bp duplication of host DNA is produced at the ends of HIV-1 integration. Alternatively, Integrase may catalyze the excision of viral DNA just after strand transfer, this is termed disintegration. This is Gag-Pol polyprotein (gag-pol) from Homo sapiens (Human).